The sequence spans 468 residues: Cyclin-T1.1 (468 aa).

Residues 336-354 (KERGVEEERRKRERDRMAG) are compositionally biased toward basic and acidic residues. Positions 336–468 (KERGVEEERR…DMDLEDGELE (133 aa)) are disordered. Pro residues predominate over residues 387 to 402 (APPPIPPQLNFPPPPI). Positions 458-468 (SDMDLEDGELE) are enriched in acidic residues.

Belongs to the cyclin family. Cyclin C subfamily.

In terms of biological role, regulatory subunit of the cyclin-dependent kinase pair (CDK9/cyclin T) complex, also called positive transcription elongation factor B (P-TEFb), which is proposed to facilitate the transition from abortive to production elongation by phosphorylating the CTD (carboxy-terminal domain) of the large subunit of RNA polymerase II (RNAP II). The protein is Cyclin-T1.1 of Caenorhabditis elegans.